Reading from the N-terminus, the 301-residue chain is Ribonuclease H2 subunit A (301 aa).

Methionine 1 carries the post-translational modification N-acetylmethionine. The 224-residue stretch at proline 28–glutamate 251 folds into the RNase H type-2 domain. Residues aspartate 34, glutamate 35, and aspartate 142 each contribute to the a divalent metal cation site. Threonine 217 bears the Phosphothreonine mark. Serine 258 carries the phosphoserine modification.

This sequence belongs to the RNase HII family. Eukaryotic subfamily. In terms of assembly, the RNase H2 complex is a heterotrimer composed of the catalytic subunit RNASEH2A and the non-catalytic subunits RNASEH2B and RNASEH2C. It depends on Mn(2+) as a cofactor. Mg(2+) serves as cofactor.

The protein resides in the nucleus. The enzyme catalyses Endonucleolytic cleavage to 5'-phosphomonoester.. Catalytic subunit of RNase HII, an endonuclease that specifically degrades the RNA of RNA:DNA hybrids. Participates in DNA replication, possibly by mediating the removal of lagging-strand Okazaki fragment RNA primers during DNA replication. Mediates the excision of single ribonucleotides from DNA:RNA duplexes. This chain is Ribonuclease H2 subunit A (Rnaseh2a), found in Rattus norvegicus (Rat).